Here is a 233-residue protein sequence, read N- to C-terminus: Ribosomal RNA small subunit methyltransferase G (233 aa).

Residues G96, L101, 146–147 (LE), and R160 each bind S-adenosyl-L-methionine.

It belongs to the methyltransferase superfamily. RNA methyltransferase RsmG family.

The protein localises to the cytoplasm. It catalyses the reaction guanosine(527) in 16S rRNA + S-adenosyl-L-methionine = N(7)-methylguanosine(527) in 16S rRNA + S-adenosyl-L-homocysteine. Functionally, specifically methylates the N7 position of guanine in position 527 of 16S rRNA. This is Ribosomal RNA small subunit methyltransferase G from Sphingopyxis alaskensis (strain DSM 13593 / LMG 18877 / RB2256) (Sphingomonas alaskensis).